Here is a 273-residue protein sequence, read N- to C-terminus: Chondrolectin (273 aa).

The N-terminal stretch at 1–21 (MIRIASLLLGAALLCAQGAFA) is a signal peptide. At 22 to 216 (RRVVSGQKVC…VVTEAGIIPN (195 aa)) the chain is on the extracellular side. A C-type lectin domain is found at 35-179 (VKHPCYKMAY…CNMKHNYICK (145 aa)). Cystine bridges form between Cys-61-Cys-178 and Cys-144-Cys-170. Asn-86 carries N-linked (GlcNAc...) asparagine glycosylation. A helical transmembrane segment spans residues 217–237 (LIYVIIPTIPLLLLILVALGT). Residues 238–273 (CCFQMLHKSKGRSKTSPNQSTLWISKSTRKESGMEV) lie on the Cytoplasmic side of the membrane. The interval 247 to 273 (KGRSKTSPNQSTLWISKSTRKESGMEV) is disordered. Over residues 251–263 (KTSPNQSTLWISK) the composition is skewed to polar residues.

As to quaternary structure, interacts with RABGGTB. In terms of tissue distribution, in adult mice preferentially expressed in skeletal muscle, testis, brain, and lung. Expressed in striated muscle (at protein level). Expressed in spinal cord. Detected in spinal cord fast motor neurons (at protein level).

It is found in the membrane. May play a role in the development of the nervous system such as in neurite outgrowth and elongation. May be involved in motor axon growth and guidance. In Mus musculus (Mouse), this protein is Chondrolectin (Chodl).